A 176-amino-acid chain; its full sequence is Small ribosomal subunit protein uS5 (176 aa).

The S5 DRBM domain occupies 11–74 (LSEVLVDVNR…QAAKKRMMKV (64 aa)).

Belongs to the universal ribosomal protein uS5 family. As to quaternary structure, part of the 30S ribosomal subunit. Contacts proteins S4 and S8.

Its function is as follows. With S4 and S12 plays an important role in translational accuracy. Functionally, located at the back of the 30S subunit body where it stabilizes the conformation of the head with respect to the body. This is Small ribosomal subunit protein uS5 from Rickettsia rickettsii (strain Iowa).